A 141-amino-acid chain; its full sequence is Large ribosomal subunit protein uL14 (141 aa).

The protein belongs to the universal ribosomal protein uL14 family.

The chain is Large ribosomal subunit protein uL14 (RPL23) from Tetrahymena thermophila (strain SB210).